A 142-amino-acid polypeptide reads, in one-letter code: Peptide methionine sulfoxide reductase MsrB (142 aa).

Positions 2-125 (LKKDKSELTD…NSAAIQFIPY (124 aa)) constitute a MsrB domain. C114 serves as the catalytic Nucleophile.

This sequence belongs to the MsrB Met sulfoxide reductase family.

It catalyses the reaction L-methionyl-[protein] + [thioredoxin]-disulfide + H2O = L-methionyl-(R)-S-oxide-[protein] + [thioredoxin]-dithiol. The polypeptide is Peptide methionine sulfoxide reductase MsrB (Staphylococcus aureus (strain Mu3 / ATCC 700698)).